Here is a 626-residue protein sequence, read N- to C-terminus: Alpha terpineol synthase, chloroplastic (626 aa).

The N-terminal 38 residues, M1–V38, are a transit peptide targeting the chloroplast. Mg(2+) is bound by residues D377, D381, and D529. The DDXXD motif motif lies at D377–D381.

This sequence belongs to the terpene synthase family. Tpsd subfamily. Mg(2+) is required as a cofactor. The cofactor is Mn(2+).

Its subcellular location is the plastid. It is found in the chloroplast. The catalysed reaction is (2E)-geranyl diphosphate + H2O = (S)-alpha-terpineol + diphosphate. It carries out the reaction (2E)-geranyl diphosphate + H2O = (R)-alpha-terpineol + diphosphate. The enzyme catalyses (2E)-geranyl diphosphate + H2O = (2E)-geraniol + diphosphate. It catalyses the reaction (2E)-geranyl diphosphate = terpinolene + diphosphate. The catalysed reaction is (2E)-geranyl diphosphate = (4S)-limonene + diphosphate. It functions in the pathway terpene metabolism; oleoresin biosynthesis. The protein operates within secondary metabolite biosynthesis; terpenoid biosynthesis. Its function is as follows. Monoterpene synthase (TPS) involved in the biosynthesis of monoterpene natural products included in conifer oleoresin secretions and volatile emissions; these compounds contribute to biotic and abiotic stress defense against herbivores and pathogens. Catalyzes the conversion of (2E)-geranyl diphosphate (GPP) to (-)-alpha-terpineol, (+)-alpha-terpineol and terpin-4-ol, and, to a lower extent, to geraniol, terpinolene and (-)-limonene. The protein is Alpha terpineol synthase, chloroplastic of Pinus banksiana (Jack pine).